A 132-amino-acid chain; its full sequence is Small ribosomal subunit protein uS8 (132 aa).

It belongs to the universal ribosomal protein uS8 family. In terms of assembly, part of the 30S ribosomal subunit. Contacts proteins S5 and S12.

In terms of biological role, one of the primary rRNA binding proteins, it binds directly to 16S rRNA central domain where it helps coordinate assembly of the platform of the 30S subunit. The sequence is that of Small ribosomal subunit protein uS8 from Lactobacillus helveticus (strain DPC 4571).